The chain runs to 165 residues: MKFIIILFTLISIVTAAQRIYNKDYSYYGCNSYCDKASDQEDACGYYDDDVSYQDYYGCLCGNEIFLSNLKSCDCFTSIIASVSKSVCSKATEDSDWGYYDDSTSSIMDFFTADNTPASNTGMTTQTDGAINDNQNTGSKTSSGAANYLTSFSIGTFFVFVLGLI.

An N-terminal signal peptide occupies residues 1 to 16 (MKFIIILFTLISIVTA). The GPI-anchor amidated serine moiety is linked to residue Ser143. The propeptide at 144 to 165 (GAANYLTSFSIGTFFVFVLGLI) is removed in mature form.

This sequence belongs to the IHD1 family. In terms of processing, the GPI-anchor is attached to the protein in the endoplasmic reticulum and serves to target the protein to the cell surface. There, the glucosamine-inositol phospholipid moiety is cleaved off and the GPI-modified mannoprotein is covalently attached via its lipidless GPI glycan remnant to the 1,6-beta-glucan of the outer cell wall layer.

It is found in the secreted. The protein resides in the cell wall. It localises to the membrane. Probable GPI-anchored cell wall protein that may be involved in cell wall organization, hyphal growth, as well as in virulence. This Candida albicans (strain SC5314 / ATCC MYA-2876) (Yeast) protein is Probable cell wall protein PGA15 (PGA15).